We begin with the raw amino-acid sequence, 161 residues long: RNA pyrophosphohydrolase (161 aa).

Residues 7–149 enclose the Nudix hydrolase domain; it reads KYRPCVGIML…KKEVYKTVIE (143 aa). The Nudix box motif lies at 40 to 61; the sequence is GGIDDGEKLEQAALRELLEEVG.

Belongs to the Nudix hydrolase family. RppH subfamily. A divalent metal cation serves as cofactor.

Functionally, accelerates the degradation of transcripts by removing pyrophosphate from the 5'-end of triphosphorylated RNA, leading to a more labile monophosphorylated state that can stimulate subsequent ribonuclease cleavage. The polypeptide is RNA pyrophosphohydrolase (Wolbachia sp. subsp. Brugia malayi (strain TRS)).